The following is a 218-amino-acid chain: MSDNDELQQIAHLRREYTKGGLRRRDLPADPLTLFERWLSQACEAKLADPTAMVVATVDEHAQPYQRIVLLKHYDEKGMVFYTNLGSRKAHQIENNPRVSLLFPWHTLERQVMVIGKAERLSTLEVMKYFHSRPRDSQIGAWVSKQSSRISARGILESKFLELKQKFQQGEVPLPSFWGGFRISLEQIEFWQGGEHRLHDRFLYQRENDAWKIDRLAP.

Substrate-binding positions include 14–17 and Lys72; that span reads RREY. Residues 67–72, 82–83, Arg88, Lys89, and Gln111 each bind FMN; these read RIVLLK and YT. Substrate contacts are provided by Tyr129, Arg133, and Ser137. FMN-binding positions include 146–147 and Trp191; that span reads QS. 197-199 provides a ligand contact to substrate; the sequence is RLH. Arg201 is an FMN binding site.

This sequence belongs to the pyridoxamine 5'-phosphate oxidase family. As to quaternary structure, homodimer. Requires FMN as cofactor.

It catalyses the reaction pyridoxamine 5'-phosphate + O2 + H2O = pyridoxal 5'-phosphate + H2O2 + NH4(+). It carries out the reaction pyridoxine 5'-phosphate + O2 = pyridoxal 5'-phosphate + H2O2. The protein operates within cofactor metabolism; pyridoxal 5'-phosphate salvage; pyridoxal 5'-phosphate from pyridoxamine 5'-phosphate: step 1/1. Its pathway is cofactor metabolism; pyridoxal 5'-phosphate salvage; pyridoxal 5'-phosphate from pyridoxine 5'-phosphate: step 1/1. Its function is as follows. Catalyzes the oxidation of either pyridoxine 5'-phosphate (PNP) or pyridoxamine 5'-phosphate (PMP) into pyridoxal 5'-phosphate (PLP). The chain is Pyridoxine/pyridoxamine 5'-phosphate oxidase from Escherichia coli O139:H28 (strain E24377A / ETEC).